We begin with the raw amino-acid sequence, 430 residues long: Glutamate-1-semialdehyde 2,1-aminomutase (430 aa).

Lys-267 is subject to N6-(pyridoxal phosphate)lysine.

This sequence belongs to the class-III pyridoxal-phosphate-dependent aminotransferase family. HemL subfamily. In terms of assembly, homodimer. Pyridoxal 5'-phosphate is required as a cofactor.

It localises to the cytoplasm. The enzyme catalyses (S)-4-amino-5-oxopentanoate = 5-aminolevulinate. It functions in the pathway porphyrin-containing compound metabolism; protoporphyrin-IX biosynthesis; 5-aminolevulinate from L-glutamyl-tRNA(Glu): step 2/2. The sequence is that of Glutamate-1-semialdehyde 2,1-aminomutase from Anaeromyxobacter sp. (strain K).